The sequence spans 473 residues: Photosystem II CP43 reaction center protein (473 aa).

Positions 1-14 are excised as a propeptide; sequence MKTLYSLRRFYPVE. Residue Thr-15 is modified to N-acetylthreonine. Thr-15 bears the Phosphothreonine mark. Helical transmembrane passes span 69–93, 134–155, 178–200, 255–275, and 291–312; these read LFEV…PHLA, LLGP…KDRN, KALS…RKIT, KPFA…LSYS, and WFNN…ASQA. Residue Glu-367 coordinates [CaMn4O5] cluster. The chain crosses the membrane as a helical span at residues 447–471; the sequence is RARAAAAGFEKGIDRDFEPVLSMTP.

Belongs to the PsbB/PsbC family. PsbC subfamily. As to quaternary structure, PSII is composed of 1 copy each of membrane proteins PsbA, PsbB, PsbC, PsbD, PsbE, PsbF, PsbH, PsbI, PsbJ, PsbK, PsbL, PsbM, PsbT, PsbX, PsbY, PsbZ, Psb30/Ycf12, at least 3 peripheral proteins of the oxygen-evolving complex and a large number of cofactors. It forms dimeric complexes. Requires Binds multiple chlorophylls and provides some of the ligands for the Ca-4Mn-5O cluster of the oxygen-evolving complex. It may also provide a ligand for a Cl- that is required for oxygen evolution. PSII binds additional chlorophylls, carotenoids and specific lipids. as cofactor.

It localises to the plastid. It is found in the chloroplast thylakoid membrane. Functionally, one of the components of the core complex of photosystem II (PSII). It binds chlorophyll and helps catalyze the primary light-induced photochemical processes of PSII. PSII is a light-driven water:plastoquinone oxidoreductase, using light energy to abstract electrons from H(2)O, generating O(2) and a proton gradient subsequently used for ATP formation. The polypeptide is Photosystem II CP43 reaction center protein (Pelargonium hortorum (Common geranium)).